Here is a 447-residue protein sequence, read N- to C-terminus: D-ribitol-5-phosphate cytidylyltransferase (447 aa).

The protein belongs to the IspD/TarI cytidylyltransferase family. IspD subfamily. Homodimer.

The protein localises to the cytoplasm. The protein resides in the cytosol. It catalyses the reaction D-ribitol 5-phosphate + CTP + H(+) = CDP-L-ribitol + diphosphate. It carries out the reaction D-ribose 5-phosphate + CTP + H(+) = CDP-D-ribose + diphosphate. The enzyme catalyses D-ribulose 5-phosphate + CTP + H(+) = CDP-D-ribulose + diphosphate. Its pathway is protein modification; protein glycosylation. Cytidylyltransferase required for protein O-linked mannosylation. Catalyzes the formation of CDP-ribitol nucleotide sugar from D-ribitol 5-phosphate. CDP-ribitol is a substrate of FKTN during the biosynthesis of the phosphorylated O-mannosyl trisaccharide (N-acetylgalactosamine-beta-3-N-acetylglucosamine-beta-4-(phosphate-6-)mannose), a carbohydrate structure present in alpha-dystroglycan (DAG1), which is required for binding laminin G-like domain-containing extracellular proteins with high affinity. Shows activity toward other pentose phosphate sugars and mediates formation of CDP-ribulose or CDP-ribose using CTP and ribulose-5-phosphate or ribose-5-phosphate, respectively. Not involved in dolichol production. The protein is D-ribitol-5-phosphate cytidylyltransferase (Crppa) of Rattus norvegicus (Rat).